Reading from the N-terminus, the 312-residue chain is MGGIREKKAEYFAKLREYLEEYKSLFVVGVDNVSSQQMHEVRKELRGRAVVLMGKNTMVRRAIRGFLSDLPDFEKLLPFVKGNVGFVFTNEPLTEIKNVIVSNRVAAPARAGAVAPEDIWVRAVNTGMEPGKTSFFQALGVPTKIARGTIEIVSDVKVVDAGNKVGQSEASLLNLLNISPFTFGLTVVQVYDNGQVFPSSILDITDEELVSHFVSAVSTIASISLAIGYPTLPSVGHTLINNYKDLLAVAIAASYHYPEIEDLVDRIENPEKYAAAAPAATSAASGDAAPAEEAAAEEEEESDDDMGFGLFD.

Lys-14 is covalently cross-linked (Glycyl lysine isopeptide (Lys-Gly) (interchain with G-Cter in ubiquitin)). The residue at position 68 (Ser-68) is a Phosphoserine. Residues Lys-97 and Lys-144 each participate in a glycyl lysine isopeptide (Lys-Gly) (interchain with G-Cter in ubiquitin) cross-link. The interaction with P1A-P2B stretch occupies residues 199-230 (SSILDITDEELVSHFVSAVSTIASISLAIGYP). The interval 231–258 (TLPSVGHTLINNYKDLLAVAIAASYHYP) is interaction with P1B-P2A. Over residues 278–293 (PAATSAASGDAAPAEE) the composition is skewed to low complexity. The segment at 278–312 (PAATSAASGDAAPAEEAAAEEEEESDDDMGFGLFD) is disordered. Residues 294–306 (AAAEEEEESDDDM) show a composition bias toward acidic residues. Phosphoserine; by CK2 is present on Ser-302.

The protein belongs to the universal ribosomal protein uL10 family. In terms of assembly, component of the large ribosomal subunit (LSU). Mature yeast ribosomes consist of a small (40S) and a large (60S) subunit. The 40S small subunit contains 1 molecule of ribosomal RNA (18S rRNA) and 33 different proteins (encoded by 57 genes). The large 60S subunit contains 3 rRNA molecules (25S, 5.8S and 5S rRNA) and 46 different proteins (encoded by 81 genes). The 5 acidic ribosomal P-proteins form the stalk structure of the 60S subunit. They are organized as a pentameric complex in which uL10/P0 interacts with 2 heterodimers, P1A-P2B and P1B-P2A. uL10 directly interacts with 28S rRNA. uL10 interacts with YFL034W.

It localises to the cytoplasm. Functionally, component of the ribosome, a large ribonucleoprotein complex responsible for the synthesis of proteins in the cell. The small ribosomal subunit (SSU) binds messenger RNAs (mRNAs) and translates the encoded message by selecting cognate aminoacyl-transfer RNA (tRNA) molecules. The large subunit (LSU) contains the ribosomal catalytic site termed the peptidyl transferase center (PTC), which catalyzes the formation of peptide bonds, thereby polymerizing the amino acids delivered by tRNAs into a polypeptide chain. The nascent polypeptides leave the ribosome through a tunnel in the LSU and interact with protein factors that function in enzymatic processing, targeting, and the membrane insertion of nascent chains at the exit of the ribosomal tunnel. uL10 forms part of the P stalk that participates in recruiting G proteins to the ribosome. The polypeptide is Large ribosomal subunit protein uL10 (Saccharomyces cerevisiae (strain ATCC 204508 / S288c) (Baker's yeast)).